The primary structure comprises 143 residues: Antiholin-like protein LrgA (143 aa).

The next 4 helical transmembrane spans lie at 6–26 (VYSF…SNII), 30–50 (LPIP…LLCL), 61–81 (LGTA…ISVI), and 97–117 (VIVV…QFIL).

The protein belongs to the CidA/LrgA family. LrgA subfamily.

It is found in the cell membrane. Inhibits the expression or activity of extracellular murein hydrolases by interacting, possibly with LrgB, with the holin-like protein CidA. The LrgAB and CidA proteins may affect the proton motive force of the membrane. May be involved in programmed cell death (PCD), possibly triggering PCD in response to antibiotics and environmental stresses. The protein is Antiholin-like protein LrgA of Bacillus cereus (strain AH187).